Reading from the N-terminus, the 759-residue chain is Polyribonucleotide nucleotidyltransferase (759 aa).

Residues aspartate 522 and aspartate 528 each coordinate Mg(2+). Residues proline 588–isoleucine 647 enclose the KH domain. Residues glycine 659–valine 728 enclose the S1 motif domain. The interval alanine 734–asparagine 759 is disordered. Over residues serine 741 to asparagine 759 the composition is skewed to low complexity.

Belongs to the polyribonucleotide nucleotidyltransferase family. Mg(2+) serves as cofactor.

Its subcellular location is the cytoplasm. The enzyme catalyses RNA(n+1) + phosphate = RNA(n) + a ribonucleoside 5'-diphosphate. Functionally, involved in mRNA degradation. Catalyzes the phosphorolysis of single-stranded polyribonucleotides processively in the 3'- to 5'-direction. This is Polyribonucleotide nucleotidyltransferase from Mycobacterium sp. (strain JLS).